The sequence spans 433 residues: UDP-N-acetylglucosamine 1-carboxyvinyltransferase (433 aa).

34-35 (KN) contributes to the phosphoenolpyruvate binding site. Position 104 (Arg-104) interacts with UDP-N-acetyl-alpha-D-glucosamine. The active-site Proton donor is Cys-128. 2-(S-cysteinyl)pyruvic acid O-phosphothioketal is present on Cys-128. The UDP-N-acetyl-alpha-D-glucosamine site is built by Asp-320 and Ile-342.

It belongs to the EPSP synthase family. MurA subfamily.

It localises to the cytoplasm. The catalysed reaction is phosphoenolpyruvate + UDP-N-acetyl-alpha-D-glucosamine = UDP-N-acetyl-3-O-(1-carboxyvinyl)-alpha-D-glucosamine + phosphate. Its pathway is cell wall biogenesis; peptidoglycan biosynthesis. Cell wall formation. Adds enolpyruvyl to UDP-N-acetylglucosamine. The chain is UDP-N-acetylglucosamine 1-carboxyvinyltransferase from Parasynechococcus marenigrum (strain WH8102).